The sequence spans 301 residues: uncharacterized protein (301 aa).

Belongs to the asfivirus E301R family. As to quaternary structure, interacts with host IRF3.

In terms of biological role, plays a role in the inhibition of host innate immune system by acting as a negatively regulator of type I interferon production. Mechanistically, interacts with and prevents host IRF3 nuclear localization to inhibit its transcriptional activity. This is an uncharacterized protein from Ornithodoros (relapsing fever ticks).